Here is a 165-residue protein sequence, read N- to C-terminus: Transcription antitermination protein NusB (165 aa).

It belongs to the NusB family.

Involved in transcription antitermination. Required for transcription of ribosomal RNA (rRNA) genes. Binds specifically to the boxA antiterminator sequence of the ribosomal RNA (rrn) operons. The polypeptide is Transcription antitermination protein NusB (Rhodococcus erythropolis (strain PR4 / NBRC 100887)).